A 205-amino-acid chain; its full sequence is Molybdenum cofactor guanylyltransferase (205 aa).

Residues 14-16 (LAG), Lys27, Asp77, and Asp107 each bind GTP. Position 107 (Asp107) interacts with Mg(2+).

The protein belongs to the MobA family. In terms of assembly, monomer. Mg(2+) is required as a cofactor.

It localises to the cytoplasm. It carries out the reaction Mo-molybdopterin + GTP + H(+) = Mo-molybdopterin guanine dinucleotide + diphosphate. Functionally, transfers a GMP moiety from GTP to Mo-molybdopterin (Mo-MPT) cofactor (Moco or molybdenum cofactor) to form Mo-molybdopterin guanine dinucleotide (Mo-MGD) cofactor. This chain is Molybdenum cofactor guanylyltransferase, found in Burkholderia ambifaria (strain MC40-6).